Consider the following 167-residue polypeptide: Protein-export protein SecB (167 aa).

This sequence belongs to the SecB family. Homotetramer, a dimer of dimers. One homotetramer interacts with 1 SecA dimer.

The protein localises to the cytoplasm. Functionally, one of the proteins required for the normal export of preproteins out of the cell cytoplasm. It is a molecular chaperone that binds to a subset of precursor proteins, maintaining them in a translocation-competent state. It also specifically binds to its receptor SecA. In Idiomarina loihiensis (strain ATCC BAA-735 / DSM 15497 / L2-TR), this protein is Protein-export protein SecB.